A 233-amino-acid chain; its full sequence is MIEELQDYLAKEFNIHFDNPALLAEAFTQASYVNEHPNQGLKYYERIEFLGDAVLELIVSEYIYKRFPELPQGKLTRLRAAMVCEDSFSKFAKECHFDQYIRLGHGEEMAGARERPGLLCDIFESFIGALYLDQGRPAVEKFVQRVIFPKLDMGWFDHAVDAKTSLQEFLQRDGDIAIEYHLVEESGTENDPEFKVNVTANGDVIGEGKGSSKKHAEMQAAQQALDNMRNKNK.

Residues 6 to 135 (QDYLAKEFNI…FIGALYLDQG (130 aa)) form the RNase III domain. E48 is a binding site for Mg(2+). The active site involves D52. Mg(2+) is bound by residues D121 and E124. E124 is a catalytic residue. A DRBM domain is found at 161–230 (DAKTSLQEFL…AQQALDNMRN (70 aa)). A disordered region spans residues 205–233 (IGEGKGSSKKHAEMQAAQQALDNMRNKNK).

This sequence belongs to the ribonuclease III family. As to quaternary structure, homodimer. It depends on Mg(2+) as a cofactor.

Its subcellular location is the cytoplasm. It carries out the reaction Endonucleolytic cleavage to 5'-phosphomonoester.. In terms of biological role, digests double-stranded RNA. Involved in the processing of primary rRNA transcript to yield the immediate precursors to the large and small rRNAs (23S and 16S). Processes some mRNAs, and tRNAs when they are encoded in the rRNA operon. Processes pre-crRNA and tracrRNA of type II CRISPR loci if present in the organism. In Limosilactobacillus reuteri (strain DSM 20016) (Lactobacillus reuteri), this protein is Ribonuclease 3.